A 482-amino-acid chain; its full sequence is MSFIFKFIATFVRKMLELLQFGGKTLTHTLSIYVKTNTGKTLTVNLEPQWDIKNVKELVAPQLGLQPDDLKIIFAGKELSDATTIEQCDLGQQSVLHAIRLRPPVQRQKIQSATLEEEEPSLSDEASKPLNETLLDLQLESEERLNITDEERVRAKAHFFVHCSQCDKLCNGKLRVRCALCKGGAFTVHRDPECWDDVLKSRRIPGHCESLEVACVDNAAGDPPFAEFFFKCAEHVSGGEKDFAAPLNLIKNNIKNVPCLACTDVSDTVLVFPCASQHVTCIDCFRHYCRSRLGERQFMPHPDFGYTLPCPAGCEHSFIEEIHHFKLLTREEYDRYQRFATEEYVLQAGGVLCPQPGCGMGLLVEPDCRKVTCQNGCGYVFCRNCLQGYHIGECLPEGTGASATNSCEYTVDPNRAAEARWDEASNVTIKVSTKPCPKCRTPTERDGGCMHMVCTRAGCGFEWCWVCQTEWTRDCMGAHWFG.

Residues 30-99 (LSIYVKTNTG…LGQQSVLHAI (70 aa)) form the Ubiquitin-like domain. Serine 94 carries the post-translational modification Phosphoserine; by Pink1. Residues 157–246 (AHFFVHCSQC…SGGEKDFAAP (90 aa)) form an RING-type 0; atypical zinc finger. Zn(2+)-binding residues include cysteine 163, cysteine 166, cysteine 178, and cysteine 181. The residue at position 187 (threonine 187) is a Phosphothreonine; by Pink1. The Zn(2+) site is built by cysteine 208, cysteine 232, histidine 235, cysteine 259, cysteine 262, cysteine 274, histidine 278, cysteine 281, cysteine 284, cysteine 310, cysteine 314, cysteine 353, cysteine 358, cysteine 373, cysteine 377, cysteine 382, cysteine 385, histidine 390, cysteine 394, cysteine 436, and cysteine 439. The tract at residues 255 to 482 (KNVPCLACTD…RDCMGAHWFG (228 aa)) is TRIAD supradomain. The segment at 259–314 (CLACTDVSDTVLVFPCASQHVTCIDCFRHYCRSRLGERQFMPHPDFGYTLPCPAGC) adopts an RING-type 1 zinc-finger fold. 2 consecutive IBR-type zinc fingers follow at residues 334–394 (DRYQ…IGEC) and 432–473 (STKP…EWTR). The segment at 436–467 (CPKCRTPTERDGGCMHMVCTRAGCGFEWCWVC) adopts an RING-type 2; atypical zinc-finger fold. Residue cysteine 449 is part of the active site. The Zn(2+) site is built by cysteine 454, cysteine 459, cysteine 464, cysteine 467, cysteine 475, and histidine 479.

The protein belongs to the RBR family. Parkin subfamily. Forms an E3 ubiquitin ligase complex with E2 ubiquitin-conjugating enzymes. Interacts with Pink1. Interacts with Marf. Interacts with Paris. Interacts with septins Septin1 and pnut. Auto-ubiquitinates in an E2-dependent manner leading to its own degradation. Post-translationally, phosphorylated. Activation requires phosphorylation at Ser-94 by Pink1 and binding to Pink1-phosphorylated polyubiquitin chains. Phosphorylation at Thr-187 by Pink1 is also important for mitochondrial localization. As to expression, in oocytes, accumulates in early egg chambers where it is enriched until stages 9-10, localizing mainly to the posterior pole and anterior margin (at protein level). After stage 10 it is no longer detected in the oocyte (at protein level). In embryos, ubiquitously expressed in the early stages (stages 2 to 5) (at protein level). Expression levels decrease at later stages and becomes restricted to the brain and nerve cord from stage 9 (at protein level). Relatively higher levels of expression in the head compared to the body. Enriched in the dorsomedial (DM) dopaminergic neurons.

The protein localises to the mitochondrion. It is found in the cytoplasm. It localises to the cytosol. The catalysed reaction is [E2 ubiquitin-conjugating enzyme]-S-ubiquitinyl-L-cysteine + [acceptor protein]-L-lysine = [E2 ubiquitin-conjugating enzyme]-L-cysteine + [acceptor protein]-N(6)-ubiquitinyl-L-lysine.. The protein operates within protein modification; protein ubiquitination. In the autoinhibited state the side chain of Phe-481 inserts into a hydrophobic groove in RING-0, occluding the ubiquitin acceptor site Cys-449, whereas the REP repressor element binds RING-1 and blocks its E2-binding site. Activation of park requires 2 steps: (1) phosphorylation at Ser-94 by Pink1 and (2) binding to phosphorylated ubiquitin, leading to unlock repression of the catalytic Cys-449 by the RING-0 region via an allosteric mechanism and converting park to its fully-active form. According to another report, phosphorylation at Ser-94 by Pink1 is not essential for activation and only binding to phosphorylated ubiquitin is essential to unlock repression. E3 ubiquitin-protein ligase which accepts ubiquitin from E2 ubiquitin-conjugating enzymes in the form of a thioester and then directly transfers the ubiquitin to targeted substrates, such as Paris, Marf, Opa1, Miro, pnut, Septin1, Tom20 and porin. Mediates monoubiquitination as well as 'Lys-6', 'Lys-11', 'Lys-48'-linked and 'Lys-63'-linked polyubiquitination of substrates, depending on the context. Protects against mitochondrial dysfunction during cellular stress, by acting downstream of Pink1, to coordinate mitochondrial quality control mechanisms that remove and replace dysfunctional mitochondrial components. Depending on the severity of mitochondrial damage and/or dysfunction, activity ranges from preventing apoptosis and stimulating mitochondrial biogenesis to regulating mitochondrial dynamics and eliminating severely damaged mitochondria via mitophagy. Appears to be particularly important in maintaining the physiology and function of cells with high energy demands that are undergoing stress or altered metabolic environment, including spermatids, muscle cells and neurons such as the dopaminergic (DA) neurons. Activation and recruitment onto the outer membrane of damaged/dysfunctional mitochondria (OMM) requires Pink1-mediated phosphorylation of both park and ubiquitin. In depolarized mitochondria, mediates the decision between mitophagy or preventing apoptosis by inducing either the poly- or monoubiquitination of porin/VDAC; polyubiquitination of porin promotes mitophagy, while monoubiquitination of porin decreases mitochondrial calcium influx which ultimately inhibits apoptosis. When cellular stress results in irreversible mitochondrial damage, promotes the autophagic degradation of dysfunctional depolarized mitochondria (mitophagy) by promoting the ubiquitination of mitochondrial proteins. Preferentially assembles 'Lys-6'-, 'Lys-11'- and 'Lys-63'-linked polyubiquitin chains following mitochondrial damage, leading to mitophagy. In developing tissues, inhibits JNK-mediated apoptosis by negatively regulating bsk transcription. The Pink1-park pathway also promotes fission and/or inhibits fusion of damaged mitochondria by mediating the ubiquitination and subsequent degradation of proteins involved in mitochondrial fusion/fission such as Marf, Opa1 and fzo. This prevents the refusion of unhealthy mitochondria with the healthy mitochondrial network and/or initiates mitochondrial fragmentation facilitating their later engulfment by autophagosomes. Regulates motility of damaged mitochondria by phosphorylating Miro which likely promotes its park-dependent degradation by the proteasome; in motor neurons, this inhibits mitochondrial intracellular anterograde transport along the axons which probably increases the chance of the mitochondria being eliminated in the soma. The Pink1-park pathway is also involved in mitochondrial regeneration processes such as promoting mitochondrial biogenesis, activating localized mitochondrial repair, promoting selective turnover of mitochondrial proteins and initiating the mitochondrial import of endogenous proteins. Involved in mitochondrial biogenesis via the ubiquitination of transcriptional repressor Paris which leads to its subsequent proteasomal degradation and allows activation of the transcription factor srl. Promotes localized mitochondrial repair by activating the translation of specific nuclear-encoded mitochondrial RNAs (nc-mtRNAs) on the mitochondrial surface, including several key electron transport chain component nc-mtRNAs. This is E3 ubiquitin-protein ligase parkin from Drosophila melanogaster (Fruit fly).